The primary structure comprises 21 residues: Glucose-1-phosphate adenylyltransferase large subunit (21 aa).

The interval 1 to 21 (SVTADNASETKVREIGQEKSS) is disordered. The span at 8–21 (SETKVREIGQEKSS) shows a compositional bias: basic and acidic residues.

Belongs to the bacterial/plant glucose-1-phosphate adenylyltransferase family. Heterotetramer.

It localises to the plastid. The protein resides in the chloroplast. The protein localises to the amyloplast. The catalysed reaction is alpha-D-glucose 1-phosphate + ATP + H(+) = ADP-alpha-D-glucose + diphosphate. The protein operates within glycan biosynthesis; starch biosynthesis. Activated by 3'phosphoglycerate, inhibited by orthophosphate. Allosteric regulation. Functionally, this protein plays a role in synthesis of starch. It catalyzes the synthesis of the activated glycosyl donor, ADP-glucose from Glc-1-P and ATP. The polypeptide is Glucose-1-phosphate adenylyltransferase large subunit (Spinacia oleracea (Spinach)).